The chain runs to 163 residues: Nucleotide-binding protein YajQ (163 aa).

The protein belongs to the YajQ family.

In terms of biological role, nucleotide-binding protein. The polypeptide is Nucleotide-binding protein YajQ (Shigella flexneri).